The primary structure comprises 273 residues: uncharacterized protein (273 aa).

This sequence belongs to the AtsA family.

This is an uncharacterized protein from Mycobacterium tuberculosis (strain CDC 1551 / Oshkosh).